A 216-amino-acid polypeptide reads, in one-letter code: Probable nicotinate-nucleotide adenylyltransferase (216 aa).

The protein belongs to the NadD family.

It carries out the reaction nicotinate beta-D-ribonucleotide + ATP + H(+) = deamido-NAD(+) + diphosphate. It participates in cofactor biosynthesis; NAD(+) biosynthesis; deamido-NAD(+) from nicotinate D-ribonucleotide: step 1/1. Functionally, catalyzes the reversible adenylation of nicotinate mononucleotide (NaMN) to nicotinic acid adenine dinucleotide (NaAD). This Geotalea daltonii (strain DSM 22248 / JCM 15807 / FRC-32) (Geobacter daltonii) protein is Probable nicotinate-nucleotide adenylyltransferase.